A 1249-amino-acid chain; its full sequence is MEEVITIAQIVHRGTDILSLNNEEIEALVDEIYSTLKGSNDIKNIRLIDFLFTLKDFVNHVRAEQSKLPDLSMPMEAYIRQLLVDSDVVPIVSEKKKELRVRPSTRKEIFLINGTHLAVPAEAPIEIYGLKLRLKTFSPQCFMRMAEIGSFSPETLGYVASGANLTNFIRVFMKCVDQETWKKNGEGVVVTTKENIIQFTHQYIELYKFLRSGGHSWLINRLAEEMVHRKLDREDQGSHISNIVETEEIEPEENIKRVIFFLKELSTMYSVSPVFTSGYMPLLYDLYRAGYLEVLWNPVEQKFLQHAEQREKEQMILQQVDMKLMEVTTQARQYFKIMEEKIGRVQSDAIREILTMEGKVDDPNSILQEVIKACGKQEAELITTEYLNIKKQWELQEKNACAHLKLVKQLRSGLQYAESLKVLESIRVLYKEKNNTTNWNLCKACGFKLLCPHVDMLIQLQAAEASYDTMRTKLMKFSGINKEKENNQGLIYSYFCKICGEELAHFIQEDRTADVGVIGDLNSKLRIFIWQETMKACTFIHFGKLVDVKQFANIAVNVCLPLVYSIENIKKEEDYDPLTQLYAVIYIYAYILNLIYSSQKNKEFLTITIHGMKADSSLNAYVTFLLEKMMQQYSGIINQLSEITDQWIANNFREAFKKIIHQNGLQGLSVQDDTKVLLTEILLDPLYDYAATVARIDGSIPMYKPRTPKEAEYEFKTVIGRTPAELLSQKEFYDKIYTSKYRPDFTQLARLKDIYFQEESLRVWWGGRDEEKTSTLIYLRAYELFLKYLQNAPNFNSELAEFKTYENAYGEQKALLAQQGFYNIFDPNTGRADQRTRLFEYKRLPISTLYDERGLPHKWTIYVYKAVDSSQKPAEIEVTRKDVIKKIDDHYALADLRCSVCHVLQHEVGQLNIKKVQTALKASLEFNTFYAFYESRCPKGGLHDFQDKKCVKCGLFTYIIYDHLSQPELVHDYYNNYKDQYDKEKMSIRSIQIKKDMTTPSTETQPKPPQEPWTFDYGKIIKTAKILDISPAVIEAIGAMEGRSYADIREGQGAPPPPTSMDDPRLMAVDSAVRIFLYNYNCLRHVSTFNKPPMHVERLVKHLSYEEKEDLEKVLPNVVNEYHTTFKHLRVTDPASALLYSIEFLCISFLTLYEIKEPSWVVNIVREFALTELNTIIQSEKLLSKPGAFNFMIFGEDFVCSGEDSSMDDISAYSSPGLFGEDIIDRLDDPFSIEDVDISLDVLDNLAPQ.

The protein belongs to the asfivirus M1249L family. In terms of assembly, interacts with the minor capsid protein p17 and with the hexon capsid protein p72 capsomers; these interactions form a rigid zipper structure that stabilizes the capsomers. Interacts with host IRF3.

It is found in the virion. Its subcellular location is the host cytoplasm. In terms of biological role, together with the penton and the other minor capsid proteins (p17, p49), forms a complicated network immediately below the outer capsid shell, stabilizing the whole capsid. In addition, blocks IFN-beta transactivation mediated by the cGAS-STING pathway and regulates the transcriptional activity of IFN-beta. Mechanistically, suppresses the phosphorylation of host key adapter protein TBK1 and degrades host IRF3 in the cytoplasm. This is Minor capsid protein M1249L from African swine fever virus (isolate Tick/South Africa/Pretoriuskop Pr4/1996) (ASFV).